The chain runs to 682 residues: Homeobox-leucine zipper protein HDG7 (682 aa).

The tract at residues 33–65 (LSDDSFDAMSGDEDKQEQRPKKKKRKTKYHRHT) is disordered. Basic residues predominate over residues 52–65 (PKKKKRKTKYHRHT). Residues 57–116 (RKTKYHRHTSYQIQELESFFKECPHPNEKQRLELGKKLTLESKQIKFWFQNRRTQMKTQL) constitute a DNA-binding region (homeobox). Residues 105 to 186 (FQNRRTQMKT…LDRICALANR (82 aa)) adopt a coiled-coil conformation. The 216-residue stretch at 214 to 429 (SGGTSLMFMD…LQRQCESFTM (216 aa)) folds into the START domain.

This sequence belongs to the HD-ZIP homeobox family. Class IV subfamily. In terms of assembly, interacts with AIL7/PLT7. In terms of tissue distribution, expressed in cells around the base of leaf primordia, in the outermost 2 to 3 cell layers along the boundary between two leaf primordia. Expressed in lateral root primordia and tips, and in the epidermal boundaries of two cotyledons at heart-stage embryo.

It is found in the nucleus. Its function is as follows. Probable transcription factor that binds to the DNA sequence 5'-GCATTAAATGC-3'. Seems to promote cell differentiation. The polypeptide is Homeobox-leucine zipper protein HDG7 (Arabidopsis thaliana (Mouse-ear cress)).